Consider the following 264-residue polypeptide: Dehydrodolichyl diphosphate synthase complex subunit SPAC4D7.04c (264 aa).

It belongs to the UPP synthase family. In terms of assembly, forms an active dehydrodolichyl diphosphate synthase complex with nus1. The cofactor is Mg(2+).

The protein localises to the endoplasmic reticulum membrane. It catalyses the reaction n isopentenyl diphosphate + (2E,6E)-farnesyl diphosphate = a di-trans,poly-cis-polyprenyl diphosphate + n diphosphate. The protein operates within protein modification; protein glycosylation. Functionally, with nus1, forms the dehydrodolichyl diphosphate synthase (DDS) complex, an essential component of the dolichol monophosphate (Dol-P) biosynthetic machinery. Adds multiple copies of isopentenyl pyrophosphate (IPP) to farnesyl pyrophosphate (FPP) to produce dehydrodolichyl diphosphate (Dedol-PP), a precursor of dolichol which is utilized as a sugar carrier in protein glycosylation in the endoplasmic reticulum (ER). The polypeptide is Dehydrodolichyl diphosphate synthase complex subunit SPAC4D7.04c (Schizosaccharomyces pombe (strain 972 / ATCC 24843) (Fission yeast)).